A 281-amino-acid chain; its full sequence is Ribosomal RNA small subunit methyltransferase A (281 aa).

6 residues coordinate S-adenosyl-L-methionine: Asn35, Leu37, Gly62, Glu83, Asp107, and Asn125.

The protein belongs to the class I-like SAM-binding methyltransferase superfamily. rRNA adenine N(6)-methyltransferase family. RsmA subfamily.

It is found in the cytoplasm. The enzyme catalyses adenosine(1518)/adenosine(1519) in 16S rRNA + 4 S-adenosyl-L-methionine = N(6)-dimethyladenosine(1518)/N(6)-dimethyladenosine(1519) in 16S rRNA + 4 S-adenosyl-L-homocysteine + 4 H(+). In terms of biological role, specifically dimethylates two adjacent adenosines (A1518 and A1519) in the loop of a conserved hairpin near the 3'-end of 16S rRNA in the 30S particle. May play a critical role in biogenesis of 30S subunits. In Deinococcus geothermalis (strain DSM 11300 / CIP 105573 / AG-3a), this protein is Ribosomal RNA small subunit methyltransferase A.